A 167-amino-acid polypeptide reads, in one-letter code: Heme-degrading monooxygenase (167 aa).

The interval methionine 1–glycine 50 is important for catalysis. The region spanning valine 67–glutamate 154 is the ABM domain.

It belongs to the antibiotic biosynthesis monooxygenase family. As to quaternary structure, monomer.

Its subcellular location is the cytoplasm. Its function is as follows. Catalyzes the degradation of heme to biliverdin in the presence of a suitable electron donor such as ascorbate, with the subsequent release of iron. Hardly any CO is released by the heme degradation reaction. Binds heme. Allows bacterial pathogens to use the host heme as an iron source. Release of iron from heme may play a crucial role in the pathogenicity of L.monocytogenes. This Listeria monocytogenes serovar 1/2a (strain ATCC BAA-679 / EGD-e) protein is Heme-degrading monooxygenase.